Here is a 196-residue protein sequence, read N- to C-terminus: Probable GTP-binding protein EngB (196 aa).

Residues K22–V195 form the EngB-type G domain. GTP contacts are provided by residues G30–S37, G57–T61, D75–G78, T142–D145, and F174–A176. Residues S37 and T59 each coordinate Mg(2+).

It belongs to the TRAFAC class TrmE-Era-EngA-EngB-Septin-like GTPase superfamily. EngB GTPase family. It depends on Mg(2+) as a cofactor.

Functionally, necessary for normal cell division and for the maintenance of normal septation. The protein is Probable GTP-binding protein EngB of Ligilactobacillus salivarius (strain UCC118) (Lactobacillus salivarius).